The sequence spans 603 residues: MLNDLKFSPAFKSFVDTSFFHELSRLKLEVFKLDSAEKELFSALDLENITSNTVSLSLRDDSFDPVLNNEAVTLKGSVLNFNTIESFKSCDKVKFIKEKGQQLLEQGLKNGLKECVRFYVISFADLKKYKFYYWVCMPTFQSEGSSYEIISTKSIEDGVKKDIWEQNSFISCVVDGKIQEASPQYLKVCQKVIFKDFSRLKGIPAAVTKNFLTVWSQISTRNTYTICFLRDDNSSFAAEIRVTGSNTGCLKVSGWEKNGLGKLAPKSADLSSLMDPVKIAEQSIDLNLKLMKWRIAPDIDLERIKNIKALILGSGTLGCYVARALLAWGTRHVTFVDNSTVSFSNPVRQPLFNFEDCGRPKAEAASDSLKKIFPSVVSAGYQLEIPMIGHPVSNESKQRKDYEILDELIRTHDVIFLLMDARETRWLPSVLGRMHEKIVINAALGFDSYLVMRHGNNNDNLGCYFCNDIVAPSDSLTDRTLDQMCTVTRPGVALLAASQAVELLVTYLQPSTNVLGSAPHQIRGFLNEFKTVKLETPAYQHCCASNENVILTLKENGWNFVKQALDDYKCVEQLSGLSKVQEEAELAIQEDISFDDDEELSIE.

The short motif at 313–318 (GSGTLG) is the GXGXXG motif element. Cysteine 485 (glycyl thioester intermediate) is an active-site residue.

The protein belongs to the ATG7 family. Homodimer.

Its subcellular location is the cytoplasm. The protein localises to the preautophagosomal structure. Its function is as follows. E1-like activating enzyme involved in the 2 ubiquitin-like systems required for cytoplasm to vacuole transport (Cvt) and autophagy. Activates ATG12 for its conjugation with ATG5 and ATG8 for its conjugation with phosphatidylethanolamine. Both systems are needed for the ATG8 association to Cvt vesicles and autophagosomes membranes. Autophagy is essential for maintenance of amino acid levels and protein synthesis under nitrogen starvation. Required for selective autophagic degradation of the nucleus (nucleophagy) as well as for mitophagy which contributes to regulate mitochondrial quantity and quality by eliminating the mitochondria to a basal level to fulfill cellular energy requirements and preventing excess ROS production. Plays a role in the regulation of filamentous growth and chronological longevity. The sequence is that of Ubiquitin-like modifier-activating enzyme ATG7 (ATG7) from Kluyveromyces lactis (strain ATCC 8585 / CBS 2359 / DSM 70799 / NBRC 1267 / NRRL Y-1140 / WM37) (Yeast).